The following is a 392-amino-acid chain: Aminomethyltransferase, mitochondrial (392 aa).

The transit peptide at 1-16 directs the protein to the mitochondrion; the sequence is MLRAGCRAALARRHLS. Substrate-binding residues include Glu-221, Arg-250, and Tyr-388.

Belongs to the GcvT family. In terms of assembly, the glycine cleavage system is composed of four proteins: P, T, L and H.

It is found in the mitochondrion. The catalysed reaction is N(6)-[(R)-S(8)-aminomethyldihydrolipoyl]-L-lysyl-[protein] + (6S)-5,6,7,8-tetrahydrofolate = N(6)-[(R)-dihydrolipoyl]-L-lysyl-[protein] + (6R)-5,10-methylene-5,6,7,8-tetrahydrofolate + NH4(+). Its function is as follows. The glycine cleavage system catalyzes the degradation of glycine. The polypeptide is Aminomethyltransferase, mitochondrial (Gallus gallus (Chicken)).